Here is a 1479-residue protein sequence, read N- to C-terminus: Type VII secretion system protein EssC (1479 aa).

A required for substrate secretion, protein missing this segment is unstable region spans residues 1–189 (MHKLIIKYNK…ASSLIRLTQE (189 aa)). Residues 1 to 229 (MHKLIIKYNK…RPPQPIQKNN (229 aa)) lie on the Cytoplasmic side of the membrane. A helical transmembrane segment spans residues 230–252 (TVIWRSIIPPLVMIALTVVIFLV). The Extracellular segment spans residues 253-256 (RPIG). A helical transmembrane segment spans residues 257-279 (IYILMMIGMSTVTIVFGITTYFS). Residues 280–1479 (EKKKYNKDVE…QAYQKIRWFK (1200 aa)) lie on the Cytoplasmic side of the membrane. 2 consecutive FtsK domains span residues 652–846 (DDIL…QDSN) and 997–1183 (QGPM…SEVS). ATP-binding positions include 672–679 (GTTGSGKS) and 1014–1021 (GSPGYGRT). Residues 1249–1479 (MMPDEIKYED…QAYQKIRWFK (231 aa)) form a required for substrate secretion, truncated protein is stable region.

This sequence belongs to the EssC family. In terms of assembly, homooligomer. Interacts with EsaE.

Its subcellular location is the cell membrane. Its function is as follows. Component of the type VII secretion system (Ess). Required for the secretion of substrates including EsxA and EsxB. However, unable to support secretion of the substrate protein EsxC. This chain is Type VII secretion system protein EssC, found in Staphylococcus aureus (strain NCTC 8325 / PS 47).